Here is a 179-residue protein sequence, read N- to C-terminus: Large ribosomal subunit protein uL6 (179 aa).

Belongs to the universal ribosomal protein uL6 family. Part of the 50S ribosomal subunit.

Functionally, this protein binds to the 23S rRNA, and is important in its secondary structure. It is located near the subunit interface in the base of the L7/L12 stalk, and near the tRNA binding site of the peptidyltransferase center. This is Large ribosomal subunit protein uL6 from Rhodococcus opacus (strain B4).